Here is a 932-residue protein sequence, read N- to C-terminus: Lon protease homolog 2, peroxisomal (932 aa).

The region spanning Leu-11–Val-259 is the Lon N-terminal domain. Residues Thr-304 to Pro-340 form a disordered region. The segment covering Glu-328 to Pro-340 has biased composition (basic and acidic residues). Residue Gly-486 to Thr-493 coordinates ATP. The Lon proteolytic domain maps to His-729–Gly-916. Residues Ser-822 and Lys-865 contribute to the active site. The Microbody targeting signal motif lies at Ser-930–Leu-932.

The protein belongs to the peptidase S16 family.

The protein resides in the peroxisome matrix. It catalyses the reaction Hydrolysis of proteins in presence of ATP.. Its function is as follows. ATP-dependent serine protease that mediates the selective degradation of misfolded and unassembled polypeptides in the peroxisomal matrix. Necessary for type 2 peroxisome targeting signal (PTS2)-containing protein processing and facilitates peroxisome matrix protein import. The protein is Lon protease homolog 2, peroxisomal of Aspergillus fumigatus (strain ATCC MYA-4609 / CBS 101355 / FGSC A1100 / Af293) (Neosartorya fumigata).